Consider the following 456-residue polypeptide: Serine/threonine-protein kinase meng-po (456 aa).

A disordered region spans residues 15 to 78; it reads RSFGDGGSTN…RSSIYKKPDK (64 aa). A compositionally biased stretch (low complexity) spans 22–55; it reads STNSRNSNNNSSTCTNHNNQKRCSTPLTPTSTST. In terms of domain architecture, Protein kinase spans 101–367; sequence YNIEKTLAEG…VAKYMKDRWV (267 aa). Residues 107-115 and Lys-130 contribute to the ATP site; that span reads LAEGCFAKI. Asp-221 serves as the catalytic Proton acceptor. Ser-334 bears the Phosphoserine; by PKA mark.

It belongs to the protein kinase superfamily. Ser/Thr protein kinase family. The cofactor is Mg(2+). As to expression, expressed in the mushroom bodies (at protein level).

It carries out the reaction L-seryl-[protein] + ATP = O-phospho-L-seryl-[protein] + ADP + H(+). It catalyses the reaction L-threonyl-[protein] + ATP = O-phospho-L-threonyl-[protein] + ADP + H(+). Its activity is regulated as follows. Activated by Pka-C1-mediated phosphorylation of Ser-334. Its function is as follows. Serine/threonine-protein kinase involved in memory formation. Together with the cAMP-dependent protein kinase A Pka-C1, promotes long-term memory (LTM) by regulating CrebB stability and activity. Involved in the maintenance of anesthesia-sensitive memory (ASM) which includes short-term memory (STM) and middle-term memory (MTM). This is Serine/threonine-protein kinase meng-po from Drosophila melanogaster (Fruit fly).